The primary structure comprises 242 residues: Platelet-derived growth factor subunit B (242 aa).

An N-terminal signal peptide occupies residues 1–20 (MNRCWALFLSLCCYLRLVSA). Positions 21–81 (EGDPIPEELY…ELESLSRGRR (61 aa)) are cleaved as a propeptide — removed in mature form. An N-linked (GlcNAc...) asparagine glycan is attached at asparagine 63. Cystine bridges form between cysteine 97-cysteine 141, cysteine 130-cysteine 178, and cysteine 134-cysteine 180. Residues 219–232 (PPKGKHRKFKHTHD) show a composition bias toward basic residues. Residues 219–242 (PPKGKHRKFKHTHDKKALKETLGA) form a disordered region. Over residues 233–242 (KKALKETLGA) the composition is skewed to basic and acidic residues.

This sequence belongs to the PDGF/VEGF growth factor family. In terms of assembly, antiparallel homodimer; disulfide-linked. Antiparallel heterodimer with PDGFA; disulfide-linked. The PDGFB homodimer interacts with PDGFRA and PDGFRB homodimers, and with heterodimers formed by PDGFRA and PDGFRB. The heterodimer composed of PDGFA and PDGFB interacts with PDGFRB homodimers, and with heterodimers formed by PDGFRA and PDGFRB. Interacts with XLKD1. Interacts with LRP1. Interacts with SORL1 (via the N-terminal ectodomain). Interacts with CD82; this interaction inhibits PDGFB-mediated signaling pathway.

It is found in the secreted. Functionally, growth factor that plays an essential role in the regulation of embryonic development, cell proliferation, cell migration, survival and chemotaxis. Potent mitogen for cells of mesenchymal origin. Required for normal proliferation and recruitment of pericytes and vascular smooth muscle cells in the central nervous system, skin, lung, heart and placenta. Required for normal blood vessel development, and for normal development of kidney glomeruli. Plays an important role in wound healing. Signaling is modulated by the formation of heterodimers with PDGFA. This is Platelet-derived growth factor subunit B (PDGFB) from Canis lupus familiaris (Dog).